A 131-amino-acid chain; its full sequence is Methylglyoxal synthase (131 aa).

Residues 1 to 131 (MKIALIAHDK…GDLDYRKLRK (131 aa)) form the MGS-like domain. Residues H8, K12, 34-37 (TGTT), and 54-55 (SG) contribute to the substrate site. The active-site Proton donor/acceptor is the D60. Residue H87 participates in substrate binding.

Belongs to the methylglyoxal synthase family.

The enzyme catalyses dihydroxyacetone phosphate = methylglyoxal + phosphate. Functionally, catalyzes the formation of methylglyoxal from dihydroxyacetone phosphate. The sequence is that of Methylglyoxal synthase from Bacillus mycoides (strain KBAB4) (Bacillus weihenstephanensis).